A 686-amino-acid polypeptide reads, in one-letter code: Polyribonucleotide nucleotidyltransferase (686 aa).

Positions 478 and 484 each coordinate Mg(2+). One can recognise a KH domain in the interval 545–604 (PRVEVIQIPTDKIGLLIGPGGKTINALQDEYGVNISVENDGTVYVAGVEGMSVKAAVSAI). The region spanning 614-684 (GDIYVGKVVK…KQNRISLEMV (71 aa)) is the S1 motif domain.

The protein belongs to the polyribonucleotide nucleotidyltransferase family. Mg(2+) is required as a cofactor.

The protein localises to the cytoplasm. The catalysed reaction is RNA(n+1) + phosphate = RNA(n) + a ribonucleoside 5'-diphosphate. Functionally, involved in mRNA degradation. Catalyzes the phosphorolysis of single-stranded polyribonucleotides processively in the 3'- to 5'-direction. The chain is Polyribonucleotide nucleotidyltransferase from Rubrobacter xylanophilus (strain DSM 9941 / JCM 11954 / NBRC 16129 / PRD-1).